We begin with the raw amino-acid sequence, 264 residues long: Tropinone reductase homolog At5g06060 (264 aa).

15–39 serves as a coordination point for NADP(+); sequence LVTGGTRGIGRAVVEELAKFGAKVH. Serine 148 is a binding site for substrate. Tyrosine 161 functions as the Proton acceptor in the catalytic mechanism.

It belongs to the short-chain dehydrogenases/reductases (SDR) family. SDR65C subfamily.

The chain is Tropinone reductase homolog At5g06060 from Arabidopsis thaliana (Mouse-ear cress).